A 120-amino-acid polypeptide reads, in one-letter code: C-C motif chemokine 16 (120 aa).

Positions 1–23 (MKVSEAALSLLVLILIITSASRS) are cleaved as a signal peptide. Cystine bridges form between Cys37-Cys60 and Cys38-Cys76.

Belongs to the intercrine beta (chemokine CC) family. As to expression, mainly expressed in liver, also found in spleen and thymus. Highly expressed in LPS- and IFN-gamma-activated monocytes, weakly in some lymphocytes, including natural killer cells, gamma-delta T-cells, and some T-cell clones.

The protein localises to the secreted. In terms of biological role, shows chemotactic activity for lymphocytes and monocytes but not neutrophils. Also shows potent myelosuppressive activity, suppresses proliferation of myeloid progenitor cells. Recombinant SCYA16 shows chemotactic activity for monocytes and THP-1 monocytes, but not for resting lymphocytes and neutrophils. Induces a calcium flux in THP-1 cells that were desensitized by prior expression to RANTES. The protein is C-C motif chemokine 16 (CCL16) of Homo sapiens (Human).